We begin with the raw amino-acid sequence, 188 residues long: Archaemetzincin (188 aa).

Zn(2+) is bound at residue His137. Glu138 functions as the Proton acceptor in the catalytic mechanism. Zn(2+) contacts are provided by His141, His147, Cys148, Cys153, Cys172, and Cys175.

It belongs to the peptidase M54 family. As to quaternary structure, monomer. It depends on Zn(2+) as a cofactor.

In terms of biological role, probable zinc metalloprotease whose natural substrate is unknown. This Pyrococcus horikoshii (strain ATCC 700860 / DSM 12428 / JCM 9974 / NBRC 100139 / OT-3) protein is Archaemetzincin.